An 85-amino-acid chain; its full sequence is Cell division protein ZapA (85 aa).

Positions 60–85 form a coiled coil; that stretch reads AVNVVHDYLKLKEELERLKGQIKEKD.

The protein belongs to the ZapA family. Type 2 subfamily. As to quaternary structure, homodimer. Interacts with FtsZ.

The protein resides in the cytoplasm. Activator of cell division through the inhibition of FtsZ GTPase activity, therefore promoting FtsZ assembly into bundles of protofilaments necessary for the formation of the division Z ring. It is recruited early at mid-cell but it is not essential for cell division. The protein is Cell division protein ZapA of Bacillus licheniformis (strain ATCC 14580 / DSM 13 / JCM 2505 / CCUG 7422 / NBRC 12200 / NCIMB 9375 / NCTC 10341 / NRRL NRS-1264 / Gibson 46).